A 154-amino-acid polypeptide reads, in one-letter code: Nucleoside diphosphate kinase A1 (154 aa).

Residues Lys13, Phe61, Arg89, Thr95, Arg106, and Asn116 each contribute to the ATP site. His119 serves as the catalytic Pros-phosphohistidine intermediate.

The protein belongs to the NDK family. Mg(2+) is required as a cofactor.

It is found in the cytoplasm. The catalysed reaction is a 2'-deoxyribonucleoside 5'-diphosphate + ATP = a 2'-deoxyribonucleoside 5'-triphosphate + ADP. The enzyme catalyses a ribonucleoside 5'-diphosphate + ATP = a ribonucleoside 5'-triphosphate + ADP. In terms of biological role, major role in the synthesis of nucleoside triphosphates other than ATP. The ATP gamma phosphate is transferred to the NDP beta phosphate via a ping-pong mechanism, using a phosphorylated active-site intermediate. The protein is Nucleoside diphosphate kinase A1 of Xenopus laevis (African clawed frog).